An 87-amino-acid polypeptide reads, in one-letter code: Apoptosis inducing factor BLCAP B (87 aa).

2 consecutive transmembrane segments (helical) span residues 19–39 and 43–63; these read PALWFSHSVFMGFYLLSFLLE and CTICALVFLGALFLICYSCWG.

This sequence belongs to the BLCAP family.

The protein localises to the cytoplasm. The protein resides in the nucleus. It is found in the membrane. Acts as a tumor suppressor; induces growth arrest at G(1)/S checkpoint and apoptosis via RB1-dependent and p53/TP53- and NF-kappa-B-independent mechanisms. Modulates expression of genes involved in the regulation of proliferation, cell cycle and apoptosis. The protein is Apoptosis inducing factor BLCAP B (blcap-b) of Xenopus laevis (African clawed frog).